The primary structure comprises 596 residues: Elongation factor 4 (596 aa).

Positions 2-184 (KHIRNFSIIA…VIVDQIPPPE (183 aa)) constitute a tr-type G domain. GTP is bound by residues 14–19 (DHGKST) and 131–134 (NKID).

It belongs to the TRAFAC class translation factor GTPase superfamily. Classic translation factor GTPase family. LepA subfamily.

It is found in the cell inner membrane. The enzyme catalyses GTP + H2O = GDP + phosphate + H(+). Its function is as follows. Required for accurate and efficient protein synthesis under certain stress conditions. May act as a fidelity factor of the translation reaction, by catalyzing a one-codon backward translocation of tRNAs on improperly translocated ribosomes. Back-translocation proceeds from a post-translocation (POST) complex to a pre-translocation (PRE) complex, thus giving elongation factor G a second chance to translocate the tRNAs correctly. Binds to ribosomes in a GTP-dependent manner. In Shewanella sp. (strain ANA-3), this protein is Elongation factor 4.